A 179-amino-acid polypeptide reads, in one-letter code: Transcription factor 21 (179 aa).

The interval 19–88 (DCDSLKVDSN…VQRNAANARE (70 aa)) is disordered. Polar residues-rich tracts occupy residues 30 to 49 (EFGT…NGSP) and 70 to 80 (SGVSQEGKQVQ). The bHLH domain occupies 79–131 (VQRNAANARERARMRVLSKAFSRLKTTLPWVPPDTKLSKLDTLRLASSYIAHL).

In terms of assembly, efficient DNA binding requires dimerization with another bHLH protein. Forms a heterodimer with TCF3 and binds the E box (5'-CANNTG-3'). In terms of tissue distribution, expressed at high levels in lung, kidney, gut, heart, ovary and podocytes (visceral glomerular epithelial cells). Also found in spleen, large intestine, uterus, bladder and testis.

It is found in the nucleus. Its function is as follows. Involved in epithelial-mesenchymal interactions in kidney and lung morphogenesis that include epithelial differentiation and branching morphogenesis. May be involved in the organogenesis of the spleen and heart and in cardiac and coronary artery development. May function in the development and sex differentiation of gonad via transcriptional regulation of AD4BP/SF-1. The sequence is that of Transcription factor 21 (Tcf21) from Mus musculus (Mouse).